The chain runs to 312 residues: Malate dehydrogenase (312 aa).

NAD(+) contacts are provided by residues 7–13 (GAAGGIG) and Asp-34. Substrate is bound by residues Arg-81 and Arg-87. Residues Asn-94 and 117-119 (ITN) each bind NAD(+). Substrate-binding residues include Asn-119 and Arg-153. The active-site Proton acceptor is the His-177. Residue Met-227 coordinates NAD(+).

Belongs to the LDH/MDH superfamily. MDH type 1 family. Homodimer.

It catalyses the reaction (S)-malate + NAD(+) = oxaloacetate + NADH + H(+). Catalyzes the reversible oxidation of malate to oxaloacetate. The chain is Malate dehydrogenase from Salmonella gallinarum (strain 287/91 / NCTC 13346).